Consider the following 500-residue polypeptide: NAD(P)H-quinone oxidoreductase chain 4, chloroplastic (500 aa).

Helical transmembrane passes span 4–24, 35–55, 87–107, 113–130, 134–154, 167–187, 211–231, 242–262, 272–292, 305–325, 330–350, 386–406, 416–436, and 462–482; these read FPWLTIIVVFPISAGSLMLFL, YTICICILELLLTTYAFCYNF, IGTILLTGFITTLATLAAFPV, LFHFLMLAMYSGQIGSFS, LLLFFIMWELELIPVYLLLSM, FILYTAGSSIFLLIGVLGISL, ILFYIGFLIAFAVKSPIIPLH, HYSTCMLLAGILLKMGAYGLV, AHSMFSPWLMVVGTIQIIYAA, IAYSSVSHMGFIIIGISSITD, GAILQIISHGFIGAALFFLAG, LALPGMSGFVAELIVFFGIIT, ILIIFVMAIGMILTPIYLLSM, and LFLSISILLPIIGIGIYPDFV.

Belongs to the complex I subunit 4 family.

The protein localises to the plastid. It localises to the chloroplast thylakoid membrane. It catalyses the reaction a plastoquinone + NADH + (n+1) H(+)(in) = a plastoquinol + NAD(+) + n H(+)(out). The catalysed reaction is a plastoquinone + NADPH + (n+1) H(+)(in) = a plastoquinol + NADP(+) + n H(+)(out). The polypeptide is NAD(P)H-quinone oxidoreductase chain 4, chloroplastic (Nasturtium officinale (Watercress)).